The sequence spans 150 residues: Ribonuclease H (150 aa).

Residues 1 to 141 form the RNase H type-1 domain; sequence MKSIEVHTDG…VDVLARNQAI (141 aa). Positions 9, 47, 69, and 133 each coordinate Mg(2+).

This sequence belongs to the RNase H family. In terms of assembly, monomer. Mg(2+) is required as a cofactor.

It is found in the cytoplasm. The enzyme catalyses Endonucleolytic cleavage to 5'-phosphomonoester.. In terms of biological role, endonuclease that specifically degrades the RNA of RNA-DNA hybrids. This is Ribonuclease H from Xanthomonas axonopodis pv. citri (strain 306).